Reading from the N-terminus, the 201-residue chain is Imidazole glycerol phosphate synthase subunit HisH (201 aa).

The Glutamine amidotransferase type-1 domain occupies 2–201 (KVVILDTGCA…ARLLKNFLEM (200 aa)). Cysteine 77 functions as the Nucleophile in the catalytic mechanism. Active-site residues include histidine 183 and glutamate 185.

Heterodimer of HisH and HisF.

Its subcellular location is the cytoplasm. It carries out the reaction 5-[(5-phospho-1-deoxy-D-ribulos-1-ylimino)methylamino]-1-(5-phospho-beta-D-ribosyl)imidazole-4-carboxamide + L-glutamine = D-erythro-1-(imidazol-4-yl)glycerol 3-phosphate + 5-amino-1-(5-phospho-beta-D-ribosyl)imidazole-4-carboxamide + L-glutamate + H(+). The enzyme catalyses L-glutamine + H2O = L-glutamate + NH4(+). It participates in amino-acid biosynthesis; L-histidine biosynthesis; L-histidine from 5-phospho-alpha-D-ribose 1-diphosphate: step 5/9. Its function is as follows. IGPS catalyzes the conversion of PRFAR and glutamine to IGP, AICAR and glutamate. The HisH subunit catalyzes the hydrolysis of glutamine to glutamate and ammonia as part of the synthesis of IGP and AICAR. The resulting ammonia molecule is channeled to the active site of HisF. This is Imidazole glycerol phosphate synthase subunit HisH from Photorhabdus laumondii subsp. laumondii (strain DSM 15139 / CIP 105565 / TT01) (Photorhabdus luminescens subsp. laumondii).